We begin with the raw amino-acid sequence, 201 residues long: MIGRLYGKIIEKQPPEMVIDVQGIGYEVLLPMTSFYHLPQVGEEATIFTHLVVREDAHLLFGFAQKQDRTLFRELIKTNGVGPKLALAILSAMSVVQFANAVENEELVKLTKIPGVGRKTAERLLVELKGKFKGIAQTDFFVEHSHETMVATYEIDASEEARDALLALGYKLTDAEKMIKKVHKSGATSEQLIRDALKASL.

The tract at residues Met-1 to Ala-64 is domain I. Positions Gln-65–Glu-143 are domain II. Residues His-144–Glu-154 are flexible linker. A domain III region spans residues Glu-154–Leu-201.

This sequence belongs to the RuvA family. Homotetramer. Forms an RuvA(8)-RuvB(12)-Holliday junction (HJ) complex. HJ DNA is sandwiched between 2 RuvA tetramers; dsDNA enters through RuvA and exits via RuvB. An RuvB hexamer assembles on each DNA strand where it exits the tetramer. Each RuvB hexamer is contacted by two RuvA subunits (via domain III) on 2 adjacent RuvB subunits; this complex drives branch migration. In the full resolvosome a probable DNA-RuvA(4)-RuvB(12)-RuvC(2) complex forms which resolves the HJ.

The protein resides in the cytoplasm. In terms of biological role, the RuvA-RuvB-RuvC complex processes Holliday junction (HJ) DNA during genetic recombination and DNA repair, while the RuvA-RuvB complex plays an important role in the rescue of blocked DNA replication forks via replication fork reversal (RFR). RuvA specifically binds to HJ cruciform DNA, conferring on it an open structure. The RuvB hexamer acts as an ATP-dependent pump, pulling dsDNA into and through the RuvAB complex. HJ branch migration allows RuvC to scan DNA until it finds its consensus sequence, where it cleaves and resolves the cruciform DNA. This chain is Holliday junction branch migration complex subunit RuvA, found in Haemophilus ducreyi (strain 35000HP / ATCC 700724).